We begin with the raw amino-acid sequence, 463 residues long: Succinate--CoA ligase [ADP-forming] subunit beta, mitochondrial (463 aa).

Residues 1-53 constitute a mitochondrion transit peptide; the sequence is MAASMFYGRQLAAAALRSHRPQTTLRAAAQVLGNSGLFNKHGLQVQQQQQRTL. Positions 61-288 constitute an ATP-grasp domain; that stretch reads MELLQEAGVS…SNSAYRQKKI (228 aa). Position 78 is an N6-acetyllysine (Lys78). Tyr84 bears the Phosphotyrosine mark. An N6-acetyllysine; alternate modification is found at Lys88. Position 88 is an N6-succinyllysine; alternate (Lys88). ATP contacts are provided by residues Lys98 and 105-107; that span reads GRG. An N6-acetyllysine mark is found at Lys129, Lys139, Lys143, and Lys216. The Mg(2+) site is built by Asn258 and Asp272. Position 279 is a phosphoserine (Ser279). Residue Asn323 coordinates substrate. Thr341 is subject to Phosphothreonine. Lys368 is modified (N6-acetyllysine). 380-382 contributes to the substrate binding site; the sequence is GIM. An N6-acetyllysine modification is found at Lys438.

The protein belongs to the succinate/malate CoA ligase beta subunit family. ATP-specific subunit beta subfamily. Heterodimer of an alpha and a beta subunit. The beta subunit determines specificity for ATP. Interacts with ALAS2. Mg(2+) serves as cofactor.

It is found in the mitochondrion. It carries out the reaction succinate + ATP + CoA = succinyl-CoA + ADP + phosphate. The protein operates within carbohydrate metabolism; tricarboxylic acid cycle; succinate from succinyl-CoA (ligase route): step 1/1. ATP-specific succinyl-CoA synthetase functions in the citric acid cycle (TCA), coupling the hydrolysis of succinyl-CoA to the synthesis of ATP and thus represents the only step of substrate-level phosphorylation in the TCA. The beta subunit provides nucleotide specificity of the enzyme and binds the substrate succinate, while the binding sites for coenzyme A and phosphate are found in the alpha subunit. This is Succinate--CoA ligase [ADP-forming] subunit beta, mitochondrial from Mus musculus (Mouse).